Reading from the N-terminus, the 154-residue chain is Lipoprotein signal peptidase (154 aa).

Helical transmembrane passes span 7–27 (VLYL…KNYI), 58–78 (IFSG…AVVV), and 88–108 (NWLF…NFID). Catalysis depends on residues Asp-117 and Asp-133. A helical membrane pass occupies residues 128-148 (IFNIADSAITVGIVLVFIYLI).

It belongs to the peptidase A8 family.

It is found in the cell membrane. It carries out the reaction Release of signal peptides from bacterial membrane prolipoproteins. Hydrolyzes -Xaa-Yaa-Zaa-|-(S,diacylglyceryl)Cys-, in which Xaa is hydrophobic (preferably Leu), and Yaa (Ala or Ser) and Zaa (Gly or Ala) have small, neutral side chains.. Its pathway is protein modification; lipoprotein biosynthesis (signal peptide cleavage). In terms of biological role, this protein specifically catalyzes the removal of signal peptides from prolipoproteins. This chain is Lipoprotein signal peptidase, found in Lactobacillus gasseri (strain ATCC 33323 / DSM 20243 / BCRC 14619 / CIP 102991 / JCM 1131 / KCTC 3163 / NCIMB 11718 / NCTC 13722 / AM63).